We begin with the raw amino-acid sequence, 228 residues long: Leucine rich adaptor protein 1-like (228 aa).

At M1 the chain carries N-acetylmethionine. The disordered stretch occupies residues 1–89 (MEDSPLPDLR…GSPRGSHSSA (89 aa)). Basic and acidic residues-rich tracts occupy residues 8-21 (DLRD…RKVP) and 28-42 (LRGE…DRDP). The segment covering 44–56 (GGSGGGGGGGGGC) has biased composition (gly residues). The span at 57 to 88 (SSSSSYCSFPPSLSSSSSSSPTSGSPRGSHSS) shows a compositional bias: low complexity.

This chain is Leucine rich adaptor protein 1-like (LURAP1L), found in Homo sapiens (Human).